The sequence spans 199 residues: Chromophore lyase CpcT/CpeT (199 aa).

The protein belongs to the CpcT/CpeT biliprotein lyase family.

In terms of biological role, covalently attaches a chromophore to Cys residue(s) of phycobiliproteins. The protein is Chromophore lyase CpcT/CpeT of Prochlorococcus marinus (strain NATL1A).